The following is a 524-amino-acid chain: Translation initiation factor eIF2B subunit delta (524 aa).

A disordered region spans residues 1–173 (MATAAVAVRE…ERQQVPTRKD (173 aa)). A2 carries the N-acetylalanine modification. Phosphoserine is present on S12. Residues 26–40 (AEGREMTQEEKLQLR) show a composition bias toward basic and acidic residues. Residues 41–51 (KEKKQQKKKRK) show a composition bias toward basic residues. T86 is subject to Phosphothreonine. Basic and acidic residues-rich tracts occupy residues 87-121 (AKEKVPAGRSKAELRAERRAKQEAERAMKQARKGD) and 161-173 (KKPERQQVPTRKD). A may bind the chemical integrated stress response (ISR) inhibitor ISRIB region spans residues 171–180 (RKDYGSKVSL).

It belongs to the eIF-2B alpha/beta/delta subunits family. In terms of assembly, component of the translation initiation factor 2B (eIF2B) complex which is a heterodecamer of two sets of five different subunits: alpha, beta, gamma, delta and epsilon. Subunits alpha, beta and delta comprise a regulatory subcomplex and subunits epsilon and gamma comprise a catalytic subcomplex. Within the complex, the hexameric regulatory complex resides at the center, with the two heterodimeric catalytic subcomplexes bound on opposite sides.

The protein resides in the cytoplasm. It localises to the cytosol. Activated by the chemical integrated stress response (ISR) inhibitor ISRIB which stimulates guanine nucleotide exchange factor activity for both phosphorylated and unphosphorylated eIF2. Its function is as follows. Acts as a component of the translation initiation factor 2B (eIF2B) complex, which catalyzes the exchange of GDP for GTP on eukaryotic initiation factor 2 (eIF2) gamma subunit. Its guanine nucleotide exchange factor activity is repressed when bound to eIF2 complex phosphorylated on the alpha subunit, thereby limiting the amount of methionyl-initiator methionine tRNA available to the ribosome and consequently global translation is repressed. The protein is Translation initiation factor eIF2B subunit delta (EIF2B4) of Bos taurus (Bovine).